The primary structure comprises 124 residues: Fluoride-specific ion channel FluC (124 aa).

Helical transmembrane passes span 5–25, 32–52, 67–87, and 96–116; these read VYIA…SGLV, SFPY…GLVM, FAIT…SFET, and LLIA…CTWI. Na(+)-binding residues include glycine 75 and threonine 78.

The protein belongs to the fluoride channel Fluc/FEX (TC 1.A.43) family.

Its subcellular location is the cell inner membrane. The catalysed reaction is fluoride(in) = fluoride(out). Its activity is regulated as follows. Na(+) is not transported, but it plays an essential structural role and its presence is essential for fluoride channel function. Fluoride-specific ion channel. Important for reducing fluoride concentration in the cell, thus reducing its toxicity. The protein is Fluoride-specific ion channel FluC of Geobacter sp. (strain M21).